Reading from the N-terminus, the 326-residue chain is Cobalamin biosynthesis protein CobD (326 aa).

The next 4 membrane-spanning stretches (helical) occupy residues 58-78 (MRGVATILILLAASILLGVVL), 81-101 (LFDVLGAVGFILEAITVAVFL), 157-177 (FSDGVVAPALWYAVAGLPGLL), and 304-324 (VFYRACTTLAAASAVLVLPFL).

This sequence belongs to the CobD/CbiB family.

The protein resides in the cell membrane. The protein operates within cofactor biosynthesis; adenosylcobalamin biosynthesis. Functionally, converts cobyric acid to cobinamide by the addition of aminopropanol on the F carboxylic group. The polypeptide is Cobalamin biosynthesis protein CobD (Sinorhizobium fredii (strain NBRC 101917 / NGR234)).